Here is a 359-residue protein sequence, read N- to C-terminus: Acyl-CoA desaturase 3 (359 aa).

The interval 1-34 (MPGHLLQEEMTPSYTTTTTITAPPSGSLQNGREK) is disordered. The Cytoplasmic segment spans residues 1–72 (MPGHLLQEEM…EGPPPKLEYV (72 aa)). The segment covering 11 to 27 (TPSYTTTTTITAPPSGS) has biased composition (low complexity). The chain crosses the membrane as a helical span at residues 73–93 (WRNIILMALLHVGALYGITLV). Residue Asn-75 coordinates substrate. Residues 94-97 (PSCK) lie on the Lumenal side of the membrane. A helical membrane pass occupies residues 98-118 (LYTCLFAFVYYVISIEGIGAG). Residues 119 to 217 (VHRLWSHRTY…EKLVMFQRRY (99 aa)) are Cytoplasmic-facing. The Fe cation site is built by His-120 and His-125. Residues 120–125 (HRLWSH) carry the Histidine box-1 motif. Positions 148, 155, and 156 each coordinate substrate. Residues His-157, His-160, and His-161 each coordinate Fe cation. Residues 157 to 161 (HRAHH) carry the Histidine box-2 motif. Positions 188 and 189 each coordinate substrate. At Ser-203 the chain carries Phosphoserine. Residues 218–237 (YKPGILLMCFILPTLVPWYC) traverse the membrane as a helical segment. Residues 238-241 (WGET) lie on the Lumenal side of the membrane. The chain crosses the membrane as a helical span at residues 242–263 (FLNSFYVATLLRYAVVLNATWL). A substrate-binding site is contributed by Trp-262. Residues 264–359 (VNSAAHLYGY…RTGDGSHKSG (96 aa)) lie on the Cytoplasmic side of the membrane. Residues His-269, His-298, His-301, and His-302 each coordinate Fe cation. The short motif at 298–302 (HNYHH) is the Histidine box-3 element.

This sequence belongs to the fatty acid desaturase type 1 family. The cofactor is Fe(2+). In terms of tissue distribution, detected in skin, but at lower levels compared to Scd1. Detected in the middlle part of the sebaceous gland, but not in hair follicle. Not detected in liver and brain.

Its subcellular location is the endoplasmic reticulum membrane. The protein resides in the microsome membrane. It catalyses the reaction hexadecanoyl-CoA + 2 Fe(II)-[cytochrome b5] + O2 + 2 H(+) = (9Z)-hexadecenoyl-CoA + 2 Fe(III)-[cytochrome b5] + 2 H2O. Stearoyl-CoA desaturase that utilizes O(2) and electrons from reduced cytochrome b5 to introduce the first double bond into saturated fatty acyl-CoA substrates. Catalyzes the insertion of a cis double bond at the delta-9 position into fatty acyl-CoA substrates including palmitoyl-CoA. Has a strong preference for saturated fatty acids with chain lengths of 14 or 16 carbon atoms (C14:0 and C16:0), and has only very low activity with stearatate (C18:0). Required for the biosynthesis of membrane phospholipids, cholesterol esters and triglycerides. This Mus musculus (Mouse) protein is Acyl-CoA desaturase 3.